Reading from the N-terminus, the 164-residue chain is Putative protein ZNF321 (164 aa).

In Homo sapiens (Human), this protein is Putative protein ZNF321 (ZNF321P).